Reading from the N-terminus, the 332-residue chain is Thiosulfate-binding protein (332 aa).

Positions M1–A22 are cleaved as a signal peptide.

Belongs to the prokaryotic sulfate-binding protein family.

The protein localises to the periplasm. Functionally, binds thiosulfate specifically and with high affinity. Has no detectable affinity for sulfate. The sequence is that of Thiosulfate-binding protein from Pseudomonas aeruginosa (strain ATCC 15692 / DSM 22644 / CIP 104116 / JCM 14847 / LMG 12228 / 1C / PRS 101 / PAO1).